Reading from the N-terminus, the 417-residue chain is Glutamyl-tRNA reductase (417 aa).

Residues 48 to 51, Ser100, 105 to 107, and Gln111 contribute to the substrate site; these read TCNR and EDQ. The active-site Nucleophile is the Cys49. 180–185 lines the NADP(+) pocket; the sequence is GAGETG.

It belongs to the glutamyl-tRNA reductase family. Homodimer.

The catalysed reaction is (S)-4-amino-5-oxopentanoate + tRNA(Glu) + NADP(+) = L-glutamyl-tRNA(Glu) + NADPH + H(+). Its pathway is porphyrin-containing compound metabolism; protoporphyrin-IX biosynthesis; 5-aminolevulinate from L-glutamyl-tRNA(Glu): step 1/2. Catalyzes the NADPH-dependent reduction of glutamyl-tRNA(Glu) to glutamate 1-semialdehyde (GSA). The chain is Glutamyl-tRNA reductase from Methanothrix thermoacetophila (strain DSM 6194 / JCM 14653 / NBRC 101360 / PT) (Methanosaeta thermophila).